The following is a 261-amino-acid chain: WW domain-binding protein 2 (261 aa).

The GRAM domain occupies 1–84 (MALNKNHSEG…YLMKDCEIKQ (84 aa)). At tyrosine 192 the chain carries Phosphotyrosine; by YES and SRC. Positions 196–200 (PPPPY) match the PPxY motif 1 motif. A compositionally biased stretch (pro residues) spans 196–209 (PPPPYPGPMEPPVS). Positions 196-261 (PPPPYPGPME…YYPPEDKKTQ (66 aa)) are disordered. The span at 218 to 230 (AAEAKAAEAAASA) shows a compositional bias: low complexity. Phosphotyrosine; by YES and SRC is present on tyrosine 231. Over residues 245–254 (SQPPPPPYYP) the composition is skewed to pro residues. Residues 248-252 (PPPPY) carry the PPxY motif 2 motif.

Binds to the WW domain of YAP1, WWP1 and WWP2. Interacts with NEDD4. Interacts with ESR1 and UBE3A. In terms of processing, phosphorylated in repsonse to EGF as well as estrogen and progesterone hormones. Tyr-192 and Tyr-231 are phosphorylated by YES and SRC inducing nuclear translocation. As to expression, ubiquitous.

The protein resides in the cytoplasm. It is found in the nucleus. Acts as a transcriptional coactivator of estrogen and progesterone receptors (ESR1 and PGR) upon hormone activation. In presence of estrogen, binds to ESR1-responsive promoters. Synergizes with YAP1 to enhance PGR activity. Modulates expression of post-synaptic scaffolding proteins via regulation of ESR1, ESR2 and PGR. The protein is WW domain-binding protein 2 of Homo sapiens (Human).